A 506-amino-acid chain; its full sequence is Aminoaldehyde dehydrogenase 2 (506 aa).

D101 is a Na(+) binding site. NAD(+) contacts are provided by residues 161 to 163 (TPW) and 187 to 190 (KPSE). L191 provides a ligand contact to Na(+). NAD(+) is bound by residues 241 to 244 (STET) and E262. The active-site Proton acceptor is E262. C297 acts as the Nucleophile in catalysis. E396 and W462 together coordinate NAD(+).

Belongs to the aldehyde dehydrogenase family.

It carries out the reaction 4-aminobutanal + NAD(+) + H2O = 4-aminobutanoate + NADH + 2 H(+). The enzyme catalyses 3-aminopropanal + NAD(+) + H2O = beta-alanine + NADH + 2 H(+). It catalyses the reaction 4-(trimethylamino)butanal + NAD(+) + H2O = 4-(trimethylamino)butanoate + NADH + 2 H(+). The catalysed reaction is 4-guanidinobutanal + NAD(+) + H2O = 4-guanidinobutanoate + NADH + 2 H(+). Its pathway is amine and polyamine biosynthesis; betaine biosynthesis via choline pathway; betaine from betaine aldehyde: step 1/1. Dehydrogenase that catalyzes the oxidation of several aminoaldehydes. Metabolizes and detoxifies aldehyde products of polyamine degradation to non-toxic amino acids. Catalyzes the oxidation of 4-aminobutanal and 3-aminopropanal to 4-aminobutanoate and beta-alanine, respectively. Catalyzes the oxidation of 4-(trimethylamino)butanal and 4-guanidinobutanal to 4-trimethylammoniobutanoate and 4-guanidinobutanoate, respectively. The sequence is that of Aminoaldehyde dehydrogenase 2 from Zea mays (Maize).